The sequence spans 363 residues: Putative transcriptional activator MSA2 (363 aa).

The disordered stretch occupies residues 1 to 20 (MVYTTPQQQQRFSSTPQSSH). Phosphoserine occurs at positions 157 and 292.

As to quaternary structure, interacts with transcription complexes SCB-binding factor (SBF) and MCB-binding factor (MBF). Interacts with SWI4.

The sequence is that of Putative transcriptional activator MSA2 (MSA2) from Saccharomyces cerevisiae (strain ATCC 204508 / S288c) (Baker's yeast).